A 95-amino-acid chain; its full sequence is Large ribosomal subunit protein bL27 (95 aa).

A propeptide spanning residues 1-12 (MLLIKKINLQFF) is cleaved from the precursor. Residues 17 to 37 (GVGSTKNGRDSNPKYLGAKKS) are disordered.

Belongs to the bacterial ribosomal protein bL27 family. Post-translationally, the N-terminus is cleaved by ribosomal processing cysteine protease Prp.

The sequence is that of Large ribosomal subunit protein bL27 from Malacoplasma penetrans (strain HF-2) (Mycoplasma penetrans).